We begin with the raw amino-acid sequence, 313 residues long: Glutathione S-transferase omega-like 2 (313 aa).

C49 (nucleophile) is an active-site residue. Residues 161–289 (PSSLRTKIDE…TDFKHIKCHY (129 aa)) enclose the GST C-terminal domain.

It belongs to the GST superfamily. Omega family.

It is found in the cytoplasm. The protein localises to the nucleus. It localises to the golgi apparatus. It catalyses the reaction RX + glutathione = an S-substituted glutathione + a halide anion + H(+). The enzyme catalyses L-dehydroascorbate + 2 glutathione = glutathione disulfide + L-ascorbate. In terms of biological role, active as '1-Cys' thiol transferase against beta-hydroxyethyl disulfide (HED), as dehydroascorbate reductase and as dimethylarsinic acid reductase, while not active against the standard GST substrate 1-chloro-2,4-dinitrobenzene (CDNB). May be involved in cell wall organization and biogenesis. This chain is Glutathione S-transferase omega-like 2 (gto2), found in Schizosaccharomyces pombe (strain 972 / ATCC 24843) (Fission yeast).